A 288-amino-acid chain; its full sequence is Oxaloacetate decarboxylase (288 aa).

Ser-47 is a substrate binding site. Asp-85 is a Mg(2+) binding site. Substrate contacts are provided by Arg-156 and His-232.

The protein belongs to the isocitrate lyase/PEP mutase superfamily. Oxaloacetate decarboxylase family. Homotetramer; dimer of dimers. Mg(2+) serves as cofactor.

It carries out the reaction oxaloacetate + H(+) = pyruvate + CO2. Functionally, catalyzes the decarboxylation of oxaloacetate into pyruvate. Seems to play a role in maintaining cellular concentrations of bicarbonate and pyruvate. In Rhodopseudomonas palustris (strain ATCC BAA-98 / CGA009), this protein is Oxaloacetate decarboxylase.